A 421-amino-acid polypeptide reads, in one-letter code: ATP-dependent RNA helicase RhlB (421 aa).

Residues 9-37 (QKFSDFALHPKVVEALEKKGFHNCTPIQA) carry the Q motif motif. Positions 40–219 (LPLTLAGRDV…FEQMNNAEYI (180 aa)) constitute a Helicase ATP-binding domain. Residue 53–60 (AQTGTGKT) coordinates ATP. Positions 165 to 168 (DEAD) match the DEAD box motif. Residues 245–390 (RLLQTLIEEE…VSKYNPDALM (146 aa)) enclose the Helicase C-terminal domain. Residues 392–421 (DLPKPLRLTRPRTGNGPRRTGAPRNRRRSG) form a disordered region. Low complexity predominate over residues 402–414 (PRTGNGPRRTGAP).

The protein belongs to the DEAD box helicase family. RhlB subfamily. In terms of assembly, component of the RNA degradosome, which is a multiprotein complex involved in RNA processing and mRNA degradation.

The protein localises to the cytoplasm. The enzyme catalyses ATP + H2O = ADP + phosphate + H(+). Its function is as follows. DEAD-box RNA helicase involved in RNA degradation. Has RNA-dependent ATPase activity and unwinds double-stranded RNA. The protein is ATP-dependent RNA helicase RhlB of Escherichia coli O157:H7.